The sequence spans 158 residues: Trafficking protein particle complex subunit 6B (158 aa).

It belongs to the TRAPP small subunits family. BET3 subfamily. As to quaternary structure, homodimer. Part of a TRAPP complex. Heterodimer with TRAPPC3. The heterodimer TRAPPC6B-TRAPPC3 interacts with TRAPPC1 likely providing a core for TRAPP complex formation.

Its subcellular location is the golgi apparatus. The protein localises to the cis-Golgi network. It is found in the endoplasmic reticulum. Functionally, component of a transport protein particle (TRAPP) complex that may function in specific stages of inter-organelle traffic. Specifically involved in the early development of neural circuitry, likely by controlling the frequency and amplitude of intracellular calcium transients implicated in the regulation of neuron differentiation and survival. The sequence is that of Trafficking protein particle complex subunit 6B from Bos taurus (Bovine).